We begin with the raw amino-acid sequence, 334 residues long: Coiled-coil domain-containing protein 89 (334 aa).

The stretch at 75-318 forms a coiled coil; sequence EAAQRFQSER…EAYKKHSGDL (244 aa).

It belongs to the CCDC89 family. As to quaternary structure, interacts (via C-terminus) with hey1/bc8 (via Orange domain). In terms of tissue distribution, in adults, expressed at varying levels in different organs including the liver and brain, with highest expression in the testis.

It is found in the cytoplasm. The protein resides in the nucleus. This is Coiled-coil domain-containing protein 89 from Xenopus laevis (African clawed frog).